Here is a 779-residue protein sequence, read N- to C-terminus: LPS-assembly protein LptD (779 aa).

An N-terminal signal peptide occupies residues 1-23 (MKIRYSVLSTFIISALYSQDTQA).

It belongs to the LptD family. Component of the lipopolysaccharide transport and assembly complex. Interacts with LptE and LptA.

It is found in the cell outer membrane. In terms of biological role, together with LptE, is involved in the assembly of lipopolysaccharide (LPS) at the surface of the outer membrane. In Haemophilus ducreyi (strain 35000HP / ATCC 700724), this protein is LPS-assembly protein LptD.